Consider the following 138-residue polypeptide: Ribosome-binding factor A (138 aa).

The interval 116-138 is disordered; the sequence is VAQDSQHQEGPASPDAKPESTEE.

It belongs to the RbfA family. As to quaternary structure, monomer. Binds 30S ribosomal subunits, but not 50S ribosomal subunits or 70S ribosomes.

It is found in the cytoplasm. Its function is as follows. One of several proteins that assist in the late maturation steps of the functional core of the 30S ribosomal subunit. Associates with free 30S ribosomal subunits (but not with 30S subunits that are part of 70S ribosomes or polysomes). Required for efficient processing of 16S rRNA. May interact with the 5'-terminal helix region of 16S rRNA. The chain is Ribosome-binding factor A from Pseudomonas syringae pv. tomato (strain ATCC BAA-871 / DC3000).